The following is an 825-amino-acid chain: Osmosensitive cation channel TMEM63C (825 aa).

Over 1–50 the chain is Extracellular; the sequence is MAFESWPAGGVRPVEELDVRSFLMEENSTAERCYRSHSRSSVLQGLPFGG. The chain crosses the membrane as a helical span at residues 51–75; it reads VPTVLAINVVLWLILLLIFSCLRKA. Residues 76–141 lie on the Cytoplasmic side of the membrane; the sequence is AWDYGRLALL…KDEEIRSKCG (66 aa). The disordered stretch occupies residues 98 to 117; the sequence is EQSEKEKTPSDSSPSDSETK. The chain crosses the membrane as a helical span at residues 142–174; it reads IDAVTYLSFQRHIILLMMVVCLLSLTIILPVNL. Residues 175 to 198 lie on the Extracellular side of the membrane; the sequence is SGNLLGDNPENFGRTTVVNVPAQN. A helical membrane pass occupies residues 199 to 223; the sequence is IFLWLHSIFALLYFVITVLCMAHHS. Over 224–418 the chain is Cytoplasmic; sequence SRLEYREDEK…IIWENLSVCG (195 aa). Residues 419 to 448 form a helical membrane-spanning segment; that stretch reads PRWWLRCILLNILLFLLLFFLTTPAIIVNT. The Extracellular segment spans residues 449 to 463; that stretch reads MDKFNVTRPVESLRN. The chain crosses the membrane as a helical span at residues 464–493; sequence PVITQFFPTLLLWAFSILLPFIVYYSSFFE. Residues 494-497 are Cytoplasmic-facing; it reads YHWT. Residues 498–534 form a helical membrane-spanning segment; sequence RSGENQVTMHKCFLLLVFMVIILPSLGLSSLNLFFRW. The Extracellular portion of the chain corresponds to 535-557; the sequence is LFDVRFLDETDVKFQCVFLPDNG. A helical membrane pass occupies residues 558-590; the sequence is AFFVNYVITSSLIGTAMELLRIPALLVYSLRLC. The Cytoplasmic portion of the chain corresponds to 591–610; sequence FAKSKAECIHVKISQAYEFQ. A helical transmembrane segment spans residues 611–629; sequence FGLEYAWTMCIFSVSMTYS. The Extracellular segment spans residues 630–632; that stretch reads ITC. The chain crosses the membrane as a helical span at residues 633–657; the sequence is PVIVPFGLLYLVLKHMVDRYNIYYA. Topologically, residues 658-664 are cytoplasmic; the sequence is YTPTKLN. Residues 665–693 form a helical membrane-spanning segment; that stretch reads QRIHAAAISQVVVAPILCMFWLLFFSVLR. Over 694–698 the chain is Extracellular; that stretch reads LGPVQ. A helical membrane pass occupies residues 699–719; it reads PITLFTFITLLCSIAFSCFGF. At 720-825 the chain is on the cytoplasmic side; that stretch reads CMKKLRADRS…LLMDSPVAFQ (106 aa). The segment at 777 to 825 is disordered; it reads SPAHQSYGTMVNSQSSVRDAEEDEEKDLEETLETELKDDLLMDSPVAFQ. Over residues 779-793 the composition is skewed to polar residues; the sequence is AHQSYGTMVNSQSSV. Residues 796–809 are compositionally biased toward acidic residues; it reads AEEDEEKDLEETLE.

The protein belongs to the CSC1 (TC 1.A.17) family. In terms of assembly, monomer.

It is found in the endoplasmic reticulum membrane. The protein resides in the cell membrane. It catalyses the reaction Ca(2+)(in) = Ca(2+)(out). Functionally, acts as an osmosensitive cation channel preferentially activated upon hypotonic stress. In contrast to tmem63b, does not show phospholipid scramblase activity. Required for the functional integrity of the kidney glomerular filtration barrier. The polypeptide is Osmosensitive cation channel TMEM63C (tmem63c) (Danio rerio (Zebrafish)).